Here is a 200-residue protein sequence, read N- to C-terminus: Guanylate kinase (200 aa).

A Guanylate kinase-like domain is found at 4–183; that stretch reads GAVLIISGPS…AKEAMVAIAR (180 aa). ATP is bound at residue 11–18; that stretch reads GPSGCGKS.

This sequence belongs to the guanylate kinase family.

It localises to the cytoplasm. It carries out the reaction GMP + ATP = GDP + ADP. In terms of biological role, essential for recycling GMP and indirectly, cGMP. The sequence is that of Guanylate kinase from Helicobacter hepaticus (strain ATCC 51449 / 3B1).